The chain runs to 362 residues: Cytochrome c peroxidase, mitochondrial (362 aa).

A mitochondrion-targeting transit peptide spans 1-40 (MASASRQILRAASRASTRTAFAPAASRGLAARTIAGRRFY). The active-site Proton acceptor is the His121. His244 serves as a coordination point for heme b. Residue Trp260 is the Tryptophan radical intermediate of the active site.

The protein belongs to the peroxidase family. Cytochrome c peroxidase subfamily. Forms a one-to-one complex with cytochrome c. Heme b serves as cofactor.

The protein resides in the mitochondrion matrix. It localises to the mitochondrion intermembrane space. The catalysed reaction is 2 Fe(II)-[cytochrome c] + H2O2 + 2 H(+) = 2 Fe(III)-[cytochrome c] + 2 H2O. Destroys radicals which are normally produced within the cells and which are toxic to biological systems. The chain is Cytochrome c peroxidase, mitochondrial (CCP1) from Pyricularia oryzae (strain 70-15 / ATCC MYA-4617 / FGSC 8958) (Rice blast fungus).